The chain runs to 236 residues: DNA repair protein RecO (236 aa).

This sequence belongs to the RecO family.

Involved in DNA repair and RecF pathway recombination. This Stutzerimonas stutzeri (strain A1501) (Pseudomonas stutzeri) protein is DNA repair protein RecO.